Reading from the N-terminus, the 352-residue chain is MKKIVFTGGGTVGHVTLNLLLMPKFIEDGWEVHYIGDKRGIEHQEILKSGLDVTFHSIATGKLRRYFSWQNMLDVFKVGWGIVQSLFIMLRLRPQTLFSKGGFVSVPPVIAARVSGVPVFIHESDLSMGLANKIAYKFATKMYSTFEQASSLAKVEHVGAVTKVSDKNTPEPDELVDIQTHFNPKLPTVLFVGGSAGARVFNQLVTDHKKELTERYNIINLTGDSSLNELRQNLFRVDYVTDLYQPLMELADIVVTRGGANTIFELLAIAKLHVIVPLGREASRGDQIENAAYFVKKGYAEDLQESDLTLDSLEEKLSHLLSHKEDYQAKMKASKELKSLADFYQLLKKDLS.

Residues S195 and Q287 each contribute to the UDP-N-acetyl-alpha-D-glucosamine site.

This sequence belongs to the glycosyltransferase 28 family. MurG subfamily.

The protein localises to the cell membrane. The catalysed reaction is Mur2Ac(oyl-L-Ala-gamma-D-Glu-L-Lys-D-Ala-D-Ala)-di-trans,octa-cis-undecaprenyl diphosphate + UDP-N-acetyl-alpha-D-glucosamine = beta-D-GlcNAc-(1-&gt;4)-Mur2Ac(oyl-L-Ala-gamma-D-Glu-L-Lys-D-Ala-D-Ala)-di-trans,octa-cis-undecaprenyl diphosphate + UDP + H(+). It functions in the pathway cell wall biogenesis; peptidoglycan biosynthesis. In terms of biological role, cell wall formation. Catalyzes the transfer of a GlcNAc subunit on undecaprenyl-pyrophosphoryl-MurNAc-pentapeptide (lipid intermediate I) to form undecaprenyl-pyrophosphoryl-MurNAc-(pentapeptide)GlcNAc (lipid intermediate II). This chain is UDP-N-acetylglucosamine--N-acetylmuramyl-(pentapeptide) pyrophosphoryl-undecaprenol N-acetylglucosamine transferase, found in Streptococcus pneumoniae (strain Hungary19A-6).